The chain runs to 217 residues: Ufm1-specific protease 1 (217 aa).

Residues Cys-53, Asp-175, and His-177 contribute to the active site.

Belongs to the peptidase C78 family. In terms of tissue distribution, widely expressed. Expressed at higher level in brain, heart, kidney and skeletal muscle.

It is found in the cytoplasm. The protein resides in the cytosol. Functionally, thiol-dependent isopeptidase that specifically mediate the processing of UFM1 precursors as well as the deconjugation of UFM1 from target proteins. Mainly responsible for the maturation of the UFM1 precursor, a prerequisite for conjugation reactions. The chain is Ufm1-specific protease 1 from Mus musculus (Mouse).